The sequence spans 396 residues: Ribosomal RNA large subunit methyltransferase I (396 aa).

Residues 2 to 81 (SVRLVLAKGR…ETIDIAFFTR (80 aa)) form the PUA domain.

This sequence belongs to the methyltransferase superfamily. RlmI family.

The protein resides in the cytoplasm. It catalyses the reaction cytidine(1962) in 23S rRNA + S-adenosyl-L-methionine = 5-methylcytidine(1962) in 23S rRNA + S-adenosyl-L-homocysteine + H(+). Specifically methylates the cytosine at position 1962 (m5C1962) of 23S rRNA. This is Ribosomal RNA large subunit methyltransferase I from Cronobacter sakazakii (strain ATCC BAA-894) (Enterobacter sakazakii).